Consider the following 368-residue polypeptide: uncharacterized protein (368 aa).

The protein belongs to the Gfo/Idh/MocA family.

This is an uncharacterized protein from Schizosaccharomyces pombe (strain 972 / ATCC 24843) (Fission yeast).